The primary structure comprises 989 residues: Serine-repeat antigen protein 5 (989 aa).

The N-terminal stretch at 1–16 (MKSYISLFFILCVIFN) is a signal peptide. 2 disordered regions span residues 26–91 (SQTG…EKQD) and 165–245 (LPSN…RNLQ). Composition is skewed to low complexity over residues 52 to 87 (QGST…STSS), 167 to 180 (SNGT…STGT), and 191 to 225 (SSSS…SSSS). Serine 167 bears the Phosphoserine mark. Asparagine 168 is a glycosylation site (N-linked (GlcNAc...) asparagine). The interaction with PTKL stretch occupies residues 208–245 (SSSSSSSSSSSSSSSSSSESLPANGPDSPTVKPPRNLQ). Asparagine 310 carries N-linked (GlcNAc...) asparagine glycosylation. The interaction with host VTN stretch occupies residues 365–382 (YKYLSEDIVSNFKEIKAE). Cysteine 437 and cysteine 489 form a disulfide bridge. A Phosphothreonine modification is found at threonine 541. Cystine bridges form between cysteine 559–cysteine 564, cysteine 573–cysteine 602, cysteine 585–cysteine 628, cysteine 619–cysteine 664, and cysteine 747–cysteine 801. The thiol-protease-like stretch occupies residues 571 to 989 (NNCISNLQVE…TNNECYFCYV (419 aa)). Active-site residues include histidine 754 and asparagine 779. Asparagine 820 is a glycosylation site (N-linked (GlcNAc...) asparagine). Positions 835–878 (KASPEFYHNLYFKNFNVGKKNLFSEKEDNENNKKLGNNYIIFGQ) are cleaved as a propeptide — inhibition peptide. A Phosphoserine modification is found at serine 858.

Belongs to the peptidase C1 family. In terms of assembly, may interact (via C-terminus) with PTKL (via SAM domain). As to quaternary structure, interacts (via C-terminus) with human VTN (via hemopexin repeat 2); may form heterotetramers of two VTN and SERA5 P47 heterodimers; the interaction may protect merozoites from phagocytosis by host monocytes; VTN glycosylation appears to be dispensable for the interaction. Monomer. Interacts with kinase CPK1/CDPK1 at the schizont stage. In terms of processing, phosphorylation by CPK1/CDPK1 increases SERA5 protease activity towards a synthetic peptide in vitro. Just prior to merozoite egress from host erythrocytes, proteolytically cleaved into multiple fragments. Cleaved by SUB1 into p47 and p73, p73 is further cleaved by SUB1 into p56 and p18 and p56 is further processed into p50 by an unidentified protease. p47 remains covalently associated with p18 via disulfide bond. p47 can be processed into p25n and p25c by SUB1. p25c and p25n remain associated with p18. Proteolytic processing is essential for merozoite egress from host erythrocytes. The cleavage of the propeptide to produce p50 is necessary for protease activity and to promote merozoite egress.

The protein resides in the parasitophorous vacuole. The protein localises to the secreted. It is found in the cell membrane. In terms of biological role, plays an essential role during the asexual blood stage development by controlling the kinetics of merozoite egress from host erythrocytes. Specifically, prevents premature rupture of the parasitophorous vacuole and host erythrocyte membranes. Its function is as follows. May prevent merozoite phagocytosis by host monocytes via interaction with host VTN at the merozoite surface. Plays a role in parasite growth. Functionally, protease activity is controversial. The polypeptide is Serine-repeat antigen protein 5 (Plasmodium falciparum (isolate CDC / Honduras)).